Reading from the N-terminus, the 100-residue chain is Cobalt transport protein CbiN (100 aa).

Transmembrane regions (helical) follow at residues Leu8 to Val28 and Leu69 to Tyr89.

It belongs to the CbiN family. As to quaternary structure, forms an energy-coupling factor (ECF) transporter complex composed of an ATP-binding protein (A component, CbiO), a transmembrane protein (T component, CbiQ) and 2 possible substrate-capture proteins (S components, CbiM and CbiN) of unknown stoichimetry.

The protein resides in the cell inner membrane. Its pathway is cofactor biosynthesis; adenosylcobalamin biosynthesis. Part of the energy-coupling factor (ECF) transporter complex CbiMNOQ involved in cobalt import. This chain is Cobalt transport protein CbiN, found in Nostoc sp. (strain PCC 7120 / SAG 25.82 / UTEX 2576).